A 302-amino-acid chain; its full sequence is NAD kinase (302 aa).

The active-site Proton acceptor is Asp-79. Residues 79–80 (DG), 153–154 (ND), Arg-181, Asp-183, 194–199 (TAYALS), Ala-218, and Gln-252 each bind NAD(+).

The protein belongs to the NAD kinase family. Requires a divalent metal cation as cofactor.

The protein resides in the cytoplasm. The enzyme catalyses NAD(+) + ATP = ADP + NADP(+) + H(+). In terms of biological role, involved in the regulation of the intracellular balance of NAD and NADP, and is a key enzyme in the biosynthesis of NADP. Catalyzes specifically the phosphorylation on 2'-hydroxyl of the adenosine moiety of NAD to yield NADP. The sequence is that of NAD kinase from Ralstonia nicotianae (strain ATCC BAA-1114 / GMI1000) (Ralstonia solanacearum).